The primary structure comprises 364 residues: Beta-parvin (364 aa).

The interval 1 to 57 (MSSAPRSPTPRPRRMKKDESFLGKLGGTLARKRRAREVSDLQEEGKNAINSPMSPAL) is disordered. Residue serine 7 is modified to Phosphoserine. Basic and acidic residues predominate over residues 36–46 (REVSDLQEEGK). Residue serine 54 is modified to Phosphoserine. Calponin-homology (CH) domains are found at residues 87–194 (KELV…MHFR) and 254–361 (SVVK…TKYK).

Belongs to the parvin family. In terms of assembly, interacts with DYSF. Interacts with ILK, ARHGEF6, PXN (via LD motifs), ACTN2 and actin. In terms of tissue distribution, expressed predominantly in heart and skeletal muscle.

It is found in the cell junction. The protein resides in the focal adhesion. It localises to the cell membrane. Its subcellular location is the cytoplasm. The protein localises to the cytoskeleton. It is found in the cell projection. The protein resides in the lamellipodium. It localises to the myofibril. Its subcellular location is the sarcomere. The protein localises to the z line. In terms of biological role, adapter protein that plays a role in integrin signaling via ILK and in activation of the GTPases CDC42 and RAC1 by guanine exchange factors, such as ARHGEF6. Is involved in the reorganization of the actin cytoskeleton and formation of lamellipodia. Plays a role in cell adhesion, cell spreading, establishment or maintenance of cell polarity, and cell migration. The polypeptide is Beta-parvin (PARVB) (Homo sapiens (Human)).